A 367-amino-acid chain; its full sequence is tRNA/tmRNA (uracil-C(5))-methyltransferase (367 aa).

Residues Gln190, Tyr218, Asn223, Glu239, and Asp299 each contribute to the S-adenosyl-L-methionine site. Catalysis depends on Cys324, which acts as the Nucleophile. Glu358 serves as the catalytic Proton acceptor.

It belongs to the class I-like SAM-binding methyltransferase superfamily. RNA M5U methyltransferase family. TrmA subfamily.

It carries out the reaction uridine(54) in tRNA + S-adenosyl-L-methionine = 5-methyluridine(54) in tRNA + S-adenosyl-L-homocysteine + H(+). It catalyses the reaction uridine(341) in tmRNA + S-adenosyl-L-methionine = 5-methyluridine(341) in tmRNA + S-adenosyl-L-homocysteine + H(+). Its function is as follows. Dual-specificity methyltransferase that catalyzes the formation of 5-methyluridine at position 54 (m5U54) in all tRNAs, and that of position 341 (m5U341) in tmRNA (transfer-mRNA). The protein is tRNA/tmRNA (uracil-C(5))-methyltransferase of Pectobacterium atrosepticum (strain SCRI 1043 / ATCC BAA-672) (Erwinia carotovora subsp. atroseptica).